A 443-amino-acid polypeptide reads, in one-letter code: Exodeoxyribonuclease 7 large subunit (443 aa).

Belongs to the XseA family. In terms of assembly, heterooligomer composed of large and small subunits.

It localises to the cytoplasm. It carries out the reaction Exonucleolytic cleavage in either 5'- to 3'- or 3'- to 5'-direction to yield nucleoside 5'-phosphates.. Its function is as follows. Bidirectionally degrades single-stranded DNA into large acid-insoluble oligonucleotides, which are then degraded further into small acid-soluble oligonucleotides. The sequence is that of Exodeoxyribonuclease 7 large subunit from Vibrio parahaemolyticus serotype O3:K6 (strain RIMD 2210633).